Here is a 122-residue protein sequence, read N- to C-terminus: Acidic phospholipase A2 BpirPLA2-I (122 aa).

Disulfide bonds link cysteine 26–cysteine 115, cysteine 28–cysteine 44, cysteine 43–cysteine 95, cysteine 49–cysteine 122, cysteine 50–cysteine 88, cysteine 57–cysteine 81, and cysteine 75–cysteine 86. Positions 27, 29, and 31 each coordinate Ca(2+). Histidine 47 is an active-site residue. Position 48 (aspartate 48) interacts with Ca(2+). Residue aspartate 89 is part of the active site. The Antiplatelet activity signature appears at 105 to 117 (IKYWFYGAKNCQE).

Belongs to the phospholipase A2 family. Group II subfamily. D49 sub-subfamily. Ca(2+) is required as a cofactor. Expressed by the venom gland.

It localises to the secreted. It carries out the reaction a 1,2-diacyl-sn-glycero-3-phosphocholine + H2O = a 1-acyl-sn-glycero-3-phosphocholine + a fatty acid + H(+). Inhibited by EDTA and p-bromophenacyl bromide (BPB). Functionally, snake venom phospholipase A2 (PLA2) that inhibits collagen/ADP-induced platelet aggregation, and induces hypotension in rats (activity abolished in the presence of p-bromophenacyl bromide). PLA2 catalyzes the calcium-dependent hydrolysis of the 2-acyl groups in 3-sn-phosphoglycerides. This Bothrops pirajai (Piraja's lancehead) protein is Acidic phospholipase A2 BpirPLA2-I.